Reading from the N-terminus, the 241-residue chain is Chloride intracellular channel protein 1 (241 aa).

Alanine 2 carries the post-translational modification N-acetylalanine. The required for insertion into the membrane stretch occupies residues 2–90 (AEEQPQVELF…EEFLEAVLCP (89 aa)). Residue lysine 13 is modified to N6-acetyllysine. Cysteine 24 lines the glutathione pocket. S-glutathionyl cysteine; alternate is present on cysteine 24. The G-site motif lies at 24–27 (CPFS). A disulfide bridge connects residues cysteine 24 and cysteine 59. The chain crosses the membrane as a helical span at residues 26 to 46 (FSQRLFMVLWLKGVTFNVTTV). Glutathione-binding residues include leucine 64 and threonine 77. The region spanning 93–233 (YPKLAALNPE…PDDEEIELAY (141 aa)) is the GST C-terminal domain. Lysine 119 bears the N6-acetyllysine mark. Residue serine 121 is modified to Phosphoserine. The residue at position 131 (lysine 131) is an N6-acetyllysine. 2 positions are modified to phosphoserine: serine 156 and serine 211. Tyrosine 233 carries the phosphotyrosine modification.

Belongs to the chloride channel CLIC family. Monomer. Homodimer (in vitro). Interacts with TRAPPC2. Dimerization requires a conformation change that leads to the exposure of a large hydrophobic surface. In vivo, this may lead to membrane insertion. Interacts with AKAP9. In terms of processing, hydrogen peroxide treatment causes a conformation change, leading to dimerization and formation of an intramolecular disulfide bond between Cys-24 and Cys-59. As to expression, expression is prominent in heart, placenta, liver, kidney and pancreas.

Its subcellular location is the nucleus. It is found in the nucleus membrane. It localises to the cytoplasm. The protein resides in the cell membrane. The protein localises to the endoplasmic reticulum. The enzyme catalyses L-dehydroascorbate + 2 glutathione = glutathione disulfide + L-ascorbate. It catalyses the reaction chloride(in) = chloride(out). It carries out the reaction iodide(out) = iodide(in). The catalysed reaction is thiocyanate(in) = thiocyanate(out). The enzyme catalyses nitrate(in) = nitrate(out). It catalyses the reaction bromide(in) = bromide(out). It carries out the reaction fluoride(in) = fluoride(out). Its activity is regulated as follows. The oxidoreductase activity is inhibited by rapamycin, amphotericin B and IAA-94. The channel conductance is regulated by pH and redox membrane potential. Inhibited by IAA-94. Functionally, in the soluble state, catalyzes glutaredoxin-like thiol disulfide exchange reactions with reduced glutathione as electron donor. Reduces selenite and dehydroascorbate and may act as an antioxidant during oxidative stress response. Can insert into membranes and form voltage-dependent multi-ion conductive channels. Membrane insertion seems to be redox-regulated and may occur only under oxidizing conditions. Involved in regulation of the cell cycle. This is Chloride intracellular channel protein 1 from Homo sapiens (Human).